We begin with the raw amino-acid sequence, 737 residues long: Disintegrin and metalloproteinase domain-containing protein 2 (737 aa).

An N-terminal signal peptide occupies residues 1-18 (MWLLLLLLSGLSRLGGLS). Positions 19 to 180 (EPQTEGTREK…YKIRSIKPQR (162 aa)) are excised as a propeptide. The Extracellular portion of the chain corresponds to 19 to 688 (EPQTEGTREK…ASAYRSKSAR (670 aa)). Asn128 and Asn226 each carry an N-linked (GlcNAc...) asparagine glycan. A Peptidase M12B domain is found at 184–381 (HYLEIHIVVE…QSSHCLQNQP (198 aa)). Intrachain disulfides connect Cys293/Cys376, Cys335/Cys360, Cys337/Cys342, and Cys450/Cys470. N-linked (GlcNAc...) asparagine glycans are attached at residues Asn359, Asn464, Asn491, and Asn571. The Disintegrin domain maps to 389–478 (MAVCGNGELE…VCEEDFFVQD (90 aa)). The EGF-like domain occupies 617-650 (LNYDCTPEKCNHHGVCNNKKHCHCEPTYLPPDCK). 3 disulfides stabilise this stretch: Cys621–Cys632, Cys626–Cys638, and Cys640–Cys649. The chain crosses the membrane as a helical span at residues 689–709 (WPFFLIIPFYVVILVLIGMLV). Residues 710–737 (KVYSQRKKWRMDDFSSEEQFESESESKD) lie on the Cytoplasmic side of the membrane. The residue at position 731 (Ser731) is a Phosphoserine.

As to quaternary structure, heterodimer with ADAM1/fertilin subunit alpha. In terms of processing, the prodomain and the metalloprotease domain are cleaved during the epididymal maturation of the spermatozoa.

Its subcellular location is the membrane. Its function is as follows. Sperm surface membrane protein that may be involved in sperm-egg plasma membrane adhesion and fusion during fertilization. Could have a direct role in sperm-zona binding or migration of sperm from the uterus into the oviduct. Interactions with egg membrane could be mediated via binding between its disintegrin-like domain to one or more integrins receptors on the egg. This is a non catalytic metalloprotease-like protein. This chain is Disintegrin and metalloproteinase domain-containing protein 2 (Adam2), found in Rattus norvegicus (Rat).